The primary structure comprises 199 residues: uncharacterized protein (199 aa).

A disordered region spans residues 1–30 (MEDAAAPGRTEGVLERQGAPPAAGQGGALV). A coiled-coil region spans residues 71-101 (RANATNKLTVIAEQIQHLQEQARKVLEDAHR).

This is an uncharacterized protein from Homo sapiens (Human).